The following is a 54-amino-acid chain: Beta-2-microglobulin (54 aa).

In terms of domain architecture, Ig-like C1-type spans 3 to 41; that stretch reads KVELSDLSFNKDWSFYLLAHREFVPTATDKYACRVSHIT.

Belongs to the beta-2-microglobulin family. Heterodimer of an alpha chain and a beta chain. Beta-2-microglobulin is the beta-chain of major histocompatibility complex class I molecules.

The protein resides in the secreted. Component of the class I major histocompatibility complex (MHC). Involved in the presentation of peptide antigens to the immune system. This is Beta-2-microglobulin (B2M) from Mesocricetus auratus (Golden hamster).